Here is an 883-residue protein sequence, read N- to C-terminus: Alanine--tRNA ligase (883 aa).

Positions 563, 567, 673, and 677 each coordinate Zn(2+).

The protein belongs to the class-II aminoacyl-tRNA synthetase family. The cofactor is Zn(2+).

The protein resides in the cytoplasm. It carries out the reaction tRNA(Ala) + L-alanine + ATP = L-alanyl-tRNA(Ala) + AMP + diphosphate. Catalyzes the attachment of alanine to tRNA(Ala) in a two-step reaction: alanine is first activated by ATP to form Ala-AMP and then transferred to the acceptor end of tRNA(Ala). Also edits incorrectly charged Ser-tRNA(Ala) and Gly-tRNA(Ala) via its editing domain. This is Alanine--tRNA ligase from Caulobacter sp. (strain K31).